Reading from the N-terminus, the 138-residue chain is Acidic phospholipase A2 Tpu-E6a (138 aa).

A signal peptide spans 1–16 (MRTLWIMAVLLLGVKG). 7 cysteine pairs are disulfide-bonded: C42–C131, C44–C60, C59–C111, C65–C138, C66–C104, C73–C97, and C91–C102. The Ca(2+) site is built by Y43, G45, and G47. Residue H63 is part of the active site. Position 64 (D64) interacts with Ca(2+). D105 is a catalytic residue.

As to quaternary structure, monomer. Ca(2+) is required as a cofactor. Expressed by the venom gland.

Its subcellular location is the secreted. It carries out the reaction a 1,2-diacyl-sn-glycero-3-phosphocholine + H2O = a 1-acyl-sn-glycero-3-phosphocholine + a fatty acid + H(+). Functionally, snake venom phospholipase A2 (PLA2) that impairs hemostasis. It weakly inhibits ADP-induced platelet aggregation when tested on platelet rich plasma from human and rabbit blood (15-25% of inhibition at 5-10 ug of enzyme), and dose-dependently inhibits blood coagulation, possibly by inhibiting thrombin activation. Exhibits high hydrolytic activities toward L-dipalmitoyl phosphatidylcholine. PLA2 catalyzes the calcium-dependent hydrolysis of the 2-acyl groups in 3-sn-phosphoglycerides. This is Acidic phospholipase A2 Tpu-E6a from Craspedocephalus puniceus (Flat-nosed pitviper).